The sequence spans 471 residues: Glutamate--tRNA ligase (471 aa).

The 'HIGH' region motif lies at 9–19; the sequence is PSPTGYLHVGG. Residues cysteine 98, cysteine 100, cysteine 125, and histidine 127 each coordinate Zn(2+). The 'KMSKS' region motif lies at 237–241; the sequence is KLSKR. Lysine 240 contributes to the ATP binding site.

It belongs to the class-I aminoacyl-tRNA synthetase family. Glutamate--tRNA ligase type 1 subfamily. Monomer. Zn(2+) serves as cofactor.

Its subcellular location is the cytoplasm. It catalyses the reaction tRNA(Glu) + L-glutamate + ATP = L-glutamyl-tRNA(Glu) + AMP + diphosphate. Catalyzes the attachment of glutamate to tRNA(Glu) in a two-step reaction: glutamate is first activated by ATP to form Glu-AMP and then transferred to the acceptor end of tRNA(Glu). The polypeptide is Glutamate--tRNA ligase (Salmonella choleraesuis (strain SC-B67)).